A 281-amino-acid chain; its full sequence is Cell division protein DivIB (281 aa).

Positions 1–36 (MARKRITRRDPEEELSKFLRHEPGQGQETRKLSSQL) are disordered. Over 1–46 (MARKRITRRDPEEELSKFLRHEPGQGQETRKLSSQLTSLKKERRRG) the chain is Cytoplasmic. The span at 8-31 (RRDPEEELSKFLRHEPGQGQETRK) shows a compositional bias: basic and acidic residues. The helical transmembrane segment at 47–69 (LLTRLGSIMAVCLLAIAFLTYYV) threads the bilayer. At 70 to 281 (SPLADVSTVR…SAEKKAYGLS (212 aa)) the chain is on the extracellular side. The POTRA domain maps to 73–144 (ADVSTVRVLG…NTLNMQVHER (72 aa)).

Belongs to the FtsQ/DivIB family. DivIB subfamily.

It localises to the cell membrane. Cell division protein that may be involved in stabilizing or promoting the assembly of the division complex. This is Cell division protein DivIB from Lactobacillus delbrueckii subsp. bulgaricus (strain ATCC 11842 / DSM 20081 / BCRC 10696 / JCM 1002 / NBRC 13953 / NCIMB 11778 / NCTC 12712 / WDCM 00102 / Lb 14).